Reading from the N-terminus, the 194-residue chain is E3 ubiquitin-protein ligase RNF4 (194 aa).

Over residues Met-1 to Gly-12 the composition is skewed to basic residues. Positions Met-1–Thr-20 are required for ubiquitination activity. Positions Met-1–Glu-36 are disordered. The tract at residues Pro-6–Leu-65 is mediates interaction with TRPS1. 4 short sequence motifs (SUMO interaction motif) span residues Ile-40–Val-43, Ile-50–Leu-53, Val-61–Val-63, and Val-71–Val-74. Residues Ser-98 and Ser-99 each carry the phosphoserine modification. Residues Cys-136, Cys-139, Cys-158, His-160, Cys-163, Cys-166, Cys-177, and Cys-180 each contribute to the Zn(2+) site. The RING-type zinc-finger motif lies at Cys-136–Arg-181.

Homodimer (via RING-type zinc finger domain). Interacts with GSC2. Interacts with AR/the androgen receptor and TBP. Interacts with TCF20. Interacts with PATZ1. Interacts with TRPS1; negatively regulates TRPS1 transcriptional repressor activity. Interacts with PML (isoform PML-1, isoform PML-2, isoform PML-3, isoform PML-4, isoform PML-5 and isoform PML-6). Interacts with PRDM1/Blimp-1. In terms of processing, sumoylated; conjugated by one or two SUMO1 moieties. Autoubiquitinated. In terms of tissue distribution, widely expressed with highest levels in testis.

It is found in the cytoplasm. The protein localises to the nucleus. The protein resides in the nucleoplasm. It localises to the PML body. The enzyme catalyses S-ubiquitinyl-[E2 ubiquitin-conjugating enzyme]-L-cysteine + [acceptor protein]-L-lysine = [E2 ubiquitin-conjugating enzyme]-L-cysteine + N(6)-ubiquitinyl-[acceptor protein]-L-lysine.. Its pathway is protein modification; protein ubiquitination. E3 ubiquitin-protein ligase which binds polysumoylated chains covalently attached to proteins and mediates 'Lys-6'-, 'Lys-11'-, 'Lys-48'- and 'Lys-63'-linked polyubiquitination of those substrates and their subsequent targeting to the proteasome for degradation. Regulates the degradation of several proteins including PML and the transcriptional activator PEA3. Involved in chromosome alignment and spindle assembly, it regulates the kinetochore CENPH-CENPI-CENPK complex by targeting polysumoylated CENPI to proteasomal degradation. Regulates the cellular responses to hypoxia and heat shock through degradation of respectively EPAS1 and PARP1. Alternatively, it may also bind DNA/nucleosomes and have a more direct role in the regulation of transcription for instance enhancing basal transcription and steroid receptor-mediated transcriptional activation. Catalyzes ubiquitination of sumoylated PARP1 in response to PARP1 trapping to chromatin, leading to PARP1 removal from chromatin by VCP/p97. The sequence is that of E3 ubiquitin-protein ligase RNF4 from Rattus norvegicus (Rat).